Reading from the N-terminus, the 252-residue chain is Triosephosphate isomerase (252 aa).

10–12 lines the substrate pocket; sequence NWK. Catalysis depends on His96, which acts as the Electrophile. Glu168 (proton acceptor) is an active-site residue. Residues Gly174, Ser214, and 235–236 contribute to the substrate site; that span reads GG.

Belongs to the triosephosphate isomerase family. Homodimer.

The protein resides in the cytoplasm. The enzyme catalyses D-glyceraldehyde 3-phosphate = dihydroxyacetone phosphate. It participates in carbohydrate biosynthesis; gluconeogenesis. Its pathway is carbohydrate degradation; glycolysis; D-glyceraldehyde 3-phosphate from glycerone phosphate: step 1/1. Its function is as follows. Involved in the gluconeogenesis. Catalyzes stereospecifically the conversion of dihydroxyacetone phosphate (DHAP) to D-glyceraldehyde-3-phosphate (G3P). In Lactobacillus helveticus (strain DPC 4571), this protein is Triosephosphate isomerase.